The following is a 490-amino-acid chain: Betaine aldehyde dehydrogenase (490 aa).

Residue Asp93 participates in K(+) binding. Gly150 to Trp152 contacts NAD(+). Catalysis depends on Lys162, which acts as the Charge relay system. Lys176–Glu179 contributes to the NAD(+) binding site. Val180 serves as a coordination point for K(+). Gly230–Ser233 provides a ligand contact to NAD(+). Leu246 is a binding site for K(+). The Proton acceptor role is filled by Glu252. NAD(+)-binding residues include Gly254, Cys286, and Glu387. The active-site Nucleophile is Cys286. Cys286 bears the Cysteine sulfenic acid (-SOH) mark. K(+) contacts are provided by Lys457 and Gly460. Glu464 functions as the Charge relay system in the catalytic mechanism.

Belongs to the aldehyde dehydrogenase family. Dimer of dimers. K(+) is required as a cofactor.

The enzyme catalyses betaine aldehyde + NAD(+) + H2O = glycine betaine + NADH + 2 H(+). Its pathway is amine and polyamine biosynthesis; betaine biosynthesis via choline pathway; betaine from betaine aldehyde: step 1/1. Involved in the biosynthesis of the osmoprotectant glycine betaine. Catalyzes the irreversible oxidation of betaine aldehyde to the corresponding acid. This is Betaine aldehyde dehydrogenase from Yersinia pseudotuberculosis serotype O:3 (strain YPIII).